The chain runs to 61 residues: Large ribosomal subunit protein uL30 (61 aa).

This sequence belongs to the universal ribosomal protein uL30 family. Part of the 50S ribosomal subunit.

This is Large ribosomal subunit protein uL30 from Corynebacterium glutamicum (strain ATCC 13032 / DSM 20300 / JCM 1318 / BCRC 11384 / CCUG 27702 / LMG 3730 / NBRC 12168 / NCIMB 10025 / NRRL B-2784 / 534).